A 366-amino-acid chain; its full sequence is Galactoside alpha-(1,2)-fucosyltransferase 1 (366 aa).

Residues 1–8 lie on the Cytoplasmic side of the membrane; that stretch reads MWPLSHRH. The chain crosses the membrane as a helical; Signal-anchor for type II membrane protein span at residues 9–25; the sequence is LCLAFLLVCVLSAISFF. Topologically, residues 26 to 366 are lumenal; that stretch reads LHVHQDSFRH…LSPLWTLAEP (341 aa). N-linked (GlcNAc...) asparagine glycosylation is found at asparagine 66, asparagine 302, and asparagine 328.

Belongs to the glycosyltransferase 11 family.

The protein localises to the golgi apparatus. The protein resides in the golgi stack membrane. The enzyme catalyses a beta-D-galactosyl-(1-&gt;4)-N-acetyl-beta-D-glucosaminyl derivative + GDP-beta-L-fucose = an alpha-L-Fuc-(1-&gt;2)-beta-D-Gal-(1-&gt;4)-beta-D-GlcNAc derivative + GDP + H(+). It catalyses the reaction a ganglioside GA1 + GDP-beta-L-fucose = a ganglioside Fuc-GA1 + GDP + H(+). It carries out the reaction a beta-D-Gal-(1-&gt;3)-beta-D-GlcNAc-(1-&gt;3)-beta-D-Gal-(1-&gt;4)-beta-D-Glc-(1&lt;-&gt;1')-Cer(d18:1(4E)) + GDP-beta-L-fucose = alpha-L-fucosyl-(1-&gt;2)- beta-D-galactosyl-(1-&gt;3)-N-acetyl-beta-D-glucosaminyl-(1-&gt;3)-beta-D-galactosyl-(1-&gt;4)-beta-D-glucosyl-(1&lt;-&gt;1')-N-acylsphing-4-enine + GDP + H(+). The catalysed reaction is a neolactoside nLc4Cer(d18:1(4E)) + GDP-beta-L-fucose = a neolactoside IV(2)-alpha-Fuc-nLc4Cer(d18:1(4E)) + GDP + H(+). The enzyme catalyses a ganglioside GM1 + GDP-beta-L-fucose = a ganglioside Fuc-GM1 + GDP + H(+). It catalyses the reaction beta-D-galactosyl-(1-&gt;3)-N-acetyl-D-galactosamine + GDP-beta-L-fucose = alpha-L-fucosyl-(1-&gt;2)-beta-D-galactosyl-(1-&gt;3)-N-acetyl-D-galactosamine + GDP + H(+). The protein operates within protein modification; protein glycosylation. Functionally, catalyzes the transfer of L-fucose, from a guanosine diphosphate-beta-L-fucose, to the terminal galactose residue of glycoconjugates through an alpha(1,2) linkage leading to H antigen synthesis that is an intermediate substrate in the synthesis of ABO blood group antigens. H antigen is essential for maturation of the glomerular layer of the main olfactory bulb, in cell migration and early cell-cell contacts during tumor associated angiogenesis. Preferentially fucosylates soluble lactose and to a lesser extent fucosylates glycolipids gangliosides GA1 and GM1a. The polypeptide is Galactoside alpha-(1,2)-fucosyltransferase 1 (Alouatta caraya (Black howler monkey)).